Reading from the N-terminus, the 161-residue chain is 3-hydroxyacyl-[acyl-carrier-protein] dehydratase FabZ (161 aa).

Histidine 66 is a catalytic residue.

The protein belongs to the thioester dehydratase family. FabZ subfamily.

Its subcellular location is the cytoplasm. The enzyme catalyses a (3R)-hydroxyacyl-[ACP] = a (2E)-enoyl-[ACP] + H2O. In terms of biological role, involved in unsaturated fatty acids biosynthesis. Catalyzes the dehydration of short chain beta-hydroxyacyl-ACPs and long chain saturated and unsaturated beta-hydroxyacyl-ACPs. The chain is 3-hydroxyacyl-[acyl-carrier-protein] dehydratase FabZ from Gluconacetobacter diazotrophicus (strain ATCC 49037 / DSM 5601 / CCUG 37298 / CIP 103539 / LMG 7603 / PAl5).